Here is a 261-residue protein sequence, read N- to C-terminus: MRDSFLQKAIASAKDRTSLLEEIAGNCSPKPGRPSLSSSIREWVYRVGGAVIAEYKRCSPSAGAISTLDPVSYVQATRDASAAYSVLTEPNWFCGSIELIPYFARYKPVLAKDFIVSETQIRIAACMGASAALLIMEALTPRELQELAAAASRYGVEVLVETPDASHAVEASRLAPGSIIGVNSRDLKTLRVDYEAMLREVSKAREQLPGEVILVAESGIDSPDKALKAFKAGAQAILVGTAFMKNPQLREKILAELLQIP.

Belongs to the TrpC family.

It carries out the reaction 1-(2-carboxyphenylamino)-1-deoxy-D-ribulose 5-phosphate + H(+) = (1S,2R)-1-C-(indol-3-yl)glycerol 3-phosphate + CO2 + H2O. It functions in the pathway amino-acid biosynthesis; L-tryptophan biosynthesis; L-tryptophan from chorismate: step 4/5. The polypeptide is Indole-3-glycerol phosphate synthase (trpC) (Aeropyrum pernix (strain ATCC 700893 / DSM 11879 / JCM 9820 / NBRC 100138 / K1)).